We begin with the raw amino-acid sequence, 569 residues long: 2-succinyl-5-enolpyruvyl-6-hydroxy-3-cyclohexene-1-carboxylate synthase (569 aa).

Belongs to the TPP enzyme family. MenD subfamily. As to quaternary structure, homodimer. The cofactor is Mg(2+). Mn(2+) is required as a cofactor. Thiamine diphosphate serves as cofactor.

It carries out the reaction isochorismate + 2-oxoglutarate + H(+) = 5-enolpyruvoyl-6-hydroxy-2-succinyl-cyclohex-3-ene-1-carboxylate + CO2. It participates in quinol/quinone metabolism; 1,4-dihydroxy-2-naphthoate biosynthesis; 1,4-dihydroxy-2-naphthoate from chorismate: step 2/7. It functions in the pathway quinol/quinone metabolism; menaquinone biosynthesis. Functionally, catalyzes the thiamine diphosphate-dependent decarboxylation of 2-oxoglutarate and the subsequent addition of the resulting succinic semialdehyde-thiamine pyrophosphate anion to isochorismate to yield 2-succinyl-5-enolpyruvyl-6-hydroxy-3-cyclohexene-1-carboxylate (SEPHCHC). This chain is 2-succinyl-5-enolpyruvyl-6-hydroxy-3-cyclohexene-1-carboxylate synthase, found in Haemophilus ducreyi (strain 35000HP / ATCC 700724).